The chain runs to 103 residues: Glutaredoxin-C1 (103 aa).

One can recognise a Glutaredoxin domain in the interval 1–102; sequence MDRVNRLAAQ…PLLRNAGALW (102 aa). The cysteines at positions 21 and 24 are disulfide-linked.

It belongs to the glutaredoxin family. CC-type subfamily.

The protein resides in the cytoplasm. Its function is as follows. Has a glutathione-disulfide oxidoreductase activity in the presence of NADPH and glutathione reductase. Reduces low molecular weight disulfides and proteins. The polypeptide is Glutaredoxin-C1 (GRXC1) (Oryza sativa subsp. japonica (Rice)).